Here is a 179-residue protein sequence, read N- to C-terminus: Protein PLASTID REDOX INSENSITIVE 2, chloroplastic (179 aa).

Residues 1–69 (MASMHEALFS…SLSRRGFVCR (69 aa)) constitute a chloroplast transit peptide.

As to quaternary structure, binds DNA when in complex with CSP41b.

The protein resides in the plastid. The protein localises to the chloroplast stroma. Its subcellular location is the chloroplast nucleoid. Functionally, involved in redox-mediated retrograde signaling to synchronize the expression of photosynthetic genes from both the nuclear and plastidic genomes, especially in excess light conditions. Required for full expression of genes transcribed by the plastid-encoded RNA polymerase (PEP). Essential for embryo development. The sequence is that of Protein PLASTID REDOX INSENSITIVE 2, chloroplastic from Arabidopsis thaliana (Mouse-ear cress).